The following is a 544-amino-acid chain: Putative ankyrin repeat protein L289 (544 aa).

11 ANK repeats span residues lysine 31–glutamate 71, histidine 72–isoleucine 105, tyrosine 110–histidine 143, leucine 147–serine 181, glutamine 185–isoleucine 218, lysine 222–phenylalanine 255, tyrosine 259–isoleucine 297, aspartate 300–serine 339, asparagine 340–isoleucine 374, glutamine 378–asparagine 413, and threonine 414–lysine 447.

The polypeptide is Putative ankyrin repeat protein L289 (Acanthamoeba polyphaga mimivirus (APMV)).